Here is a 507-residue protein sequence, read N- to C-terminus: ATP synthase subunit alpha, chloroplastic (507 aa).

Position 170–177 (170–177) interacts with ATP; it reads GDRQTGKT.

It belongs to the ATPase alpha/beta chains family. In terms of assembly, F-type ATPases have 2 components, CF(1) - the catalytic core - and CF(0) - the membrane proton channel. CF(1) has five subunits: alpha(3), beta(3), gamma(1), delta(1), epsilon(1). CF(0) has four main subunits: a, b, b' and c.

The protein resides in the plastid. Its subcellular location is the chloroplast thylakoid membrane. The catalysed reaction is ATP + H2O + 4 H(+)(in) = ADP + phosphate + 5 H(+)(out). Produces ATP from ADP in the presence of a proton gradient across the membrane. The alpha chain is a regulatory subunit. The protein is ATP synthase subunit alpha, chloroplastic of Morus indica (Mulberry).